We begin with the raw amino-acid sequence, 90 residues long: Small ribosomal subunit protein uS15 (90 aa).

The protein belongs to the universal ribosomal protein uS15 family. In terms of assembly, part of the 30S ribosomal subunit. Forms a bridge to the 50S subunit in the 70S ribosome, contacting the 23S rRNA.

Functionally, one of the primary rRNA binding proteins, it binds directly to 16S rRNA where it helps nucleate assembly of the platform of the 30S subunit by binding and bridging several RNA helices of the 16S rRNA. In terms of biological role, forms an intersubunit bridge (bridge B4) with the 23S rRNA of the 50S subunit in the ribosome. The chain is Small ribosomal subunit protein uS15 from Herpetosiphon aurantiacus (strain ATCC 23779 / DSM 785 / 114-95).